A 159-amino-acid chain; its full sequence is Peptide deformylase (159 aa).

Fe cation-binding residues include C88 and H130. Residue E131 is part of the active site. H134 is a Fe cation binding site.

The protein belongs to the polypeptide deformylase family. Fe(2+) is required as a cofactor.

The enzyme catalyses N-terminal N-formyl-L-methionyl-[peptide] + H2O = N-terminal L-methionyl-[peptide] + formate. Removes the formyl group from the N-terminal Met of newly synthesized proteins. Requires at least a dipeptide for an efficient rate of reaction. N-terminal L-methionine is a prerequisite for activity but the enzyme has broad specificity at other positions. This Thermoanaerobacter pseudethanolicus (strain ATCC 33223 / 39E) (Clostridium thermohydrosulfuricum) protein is Peptide deformylase.